A 303-amino-acid polypeptide reads, in one-letter code: Methionyl-tRNA formyltransferase (303 aa).

110–113 (SLLP) serves as a coordination point for (6S)-5,6,7,8-tetrahydrofolate.

The protein belongs to the Fmt family.

The enzyme catalyses L-methionyl-tRNA(fMet) + (6R)-10-formyltetrahydrofolate = N-formyl-L-methionyl-tRNA(fMet) + (6S)-5,6,7,8-tetrahydrofolate + H(+). Its function is as follows. Attaches a formyl group to the free amino group of methionyl-tRNA(fMet). The formyl group appears to play a dual role in the initiator identity of N-formylmethionyl-tRNA by promoting its recognition by IF2 and preventing the misappropriation of this tRNA by the elongation apparatus. This chain is Methionyl-tRNA formyltransferase, found in Ehrlichia ruminantium (strain Gardel).